We begin with the raw amino-acid sequence, 480 residues long: Proline--tRNA ligase (480 aa).

This sequence belongs to the class-II aminoacyl-tRNA synthetase family. ProS type 3 subfamily. Homodimer.

The protein localises to the cytoplasm. The catalysed reaction is tRNA(Pro) + L-proline + ATP = L-prolyl-tRNA(Pro) + AMP + diphosphate. Catalyzes the attachment of proline to tRNA(Pro) in a two-step reaction: proline is first activated by ATP to form Pro-AMP and then transferred to the acceptor end of tRNA(Pro). The protein is Proline--tRNA ligase of Pyrococcus abyssi (strain GE5 / Orsay).